A 181-amino-acid chain; its full sequence is Dehydration-responsive element-binding protein 1E (181 aa).

The Nuclear localization signal motif lies at 14–26 (KKRAGRRIFKETR). The AP2/ERF DNA-binding region spans 29-86 (IYRGVRRRDGDKWVCEVREPIHQRRVWLGTYPTADMAARAHDVAVLALRGRSACLNFS).

This sequence belongs to the AP2/ERF transcription factor family. ERF subfamily.

It localises to the nucleus. Its function is as follows. Transcriptional activator that binds specifically to the DNA sequence 5'-[AG]CCGAC-3'. Binding to the C-repeat/DRE element mediates cold or dehydration-inducible transcription. CBF/DREB1 factors play a key role in freezing tolerance and cold acclimation. In Arabidopsis thaliana (Mouse-ear cress), this protein is Dehydration-responsive element-binding protein 1E (DREB1E).